The sequence spans 223 residues: DNA mismatch repair protein MutH (223 aa).

This sequence belongs to the MutH family.

The protein resides in the cytoplasm. Its function is as follows. Sequence-specific endonuclease that cleaves unmethylated GATC sequences. It is involved in DNA mismatch repair. This chain is DNA mismatch repair protein MutH, found in Haemophilus influenzae (strain 86-028NP).